A 131-amino-acid polypeptide reads, in one-letter code: D-ribose pyranase (131 aa).

H20 serves as the catalytic Proton donor. Residues D28, H98, and 120–122 (YAN) each bind substrate.

Belongs to the RbsD / FucU family. RbsD subfamily. In terms of assembly, homodecamer.

The protein resides in the cytoplasm. The enzyme catalyses beta-D-ribopyranose = beta-D-ribofuranose. Its pathway is carbohydrate metabolism; D-ribose degradation; D-ribose 5-phosphate from beta-D-ribopyranose: step 1/2. Catalyzes the interconversion of beta-pyran and beta-furan forms of D-ribose. In Bacillus licheniformis (strain ATCC 14580 / DSM 13 / JCM 2505 / CCUG 7422 / NBRC 12200 / NCIMB 9375 / NCTC 10341 / NRRL NRS-1264 / Gibson 46), this protein is D-ribose pyranase.